A 355-amino-acid chain; its full sequence is GTP 3',8-cyclase (355 aa).

Positions 16 to 242 (RYGRRATDMR…PDPRARDGAP (227 aa)) constitute a Radical SAM core domain. Residue Arg25 coordinates GTP. The [4Fe-4S] cluster site is built by Cys32 and Cys36. Tyr38 serves as a coordination point for S-adenosyl-L-methionine. Cys39 contacts [4Fe-4S] cluster. Position 76 (Arg76) interacts with GTP. Gly80 contributes to the S-adenosyl-L-methionine binding site. Residue Thr107 coordinates GTP. Residue Ser131 coordinates S-adenosyl-L-methionine. Lys168 contributes to the GTP binding site. Met202 contacts S-adenosyl-L-methionine. The [4Fe-4S] cluster site is built by Cys277 and Cys280. 282–284 (RTR) lines the GTP pocket. Cys294 contacts [4Fe-4S] cluster.

The protein belongs to the radical SAM superfamily. MoaA family. Monomer. [4Fe-4S] cluster serves as cofactor.

It carries out the reaction GTP + AH2 + S-adenosyl-L-methionine = (8S)-3',8-cyclo-7,8-dihydroguanosine 5'-triphosphate + 5'-deoxyadenosine + L-methionine + A + H(+). The protein operates within cofactor biosynthesis; molybdopterin biosynthesis. Its function is as follows. Catalyzes, together with MoaC, the conversion of 5'-GTP to cyclic pyranopterin monophosphate (cPMP or molybdopterin precursor Z). Functionally, catalyzes the cyclization of GTP to (8S)-3',8-cyclo-7,8-dihydroguanosine 5'-triphosphate. This Paenarthrobacter nicotinovorans (Arthrobacter nicotinovorans) protein is GTP 3',8-cyclase.